The following is a 359-amino-acid chain: Cytohesin-interacting protein (359 aa).

The PDZ domain occupies 77–166; that stretch reads VVTVEKQDNG…LLTIETLNGT (90 aa). A coiled-coil region spans residues 165-188; that stretch reads GTMIHRRAELEAKLQTLKQTLKKK. Residues 166-188 are interaction with CYTH1; that stretch reads TMIHRRAELEAKLQTLKQTLKKK.

Interacts with CYTH1 and SNX27.

Its subcellular location is the cytoplasm. It is found in the early endosome. In terms of biological role, by its binding to cytohesin-1 (CYTH1), it modifies activation of ARFs by CYTH1 and its precise function may be to sequester CYTH1 in the cytoplasm. This chain is Cytohesin-interacting protein (Cytip), found in Mus musculus (Mouse).